The chain runs to 967 residues: LRR receptor-like serine/threonine-protein kinase ERL2 (967 aa).

Residues 1 to 27 (MRRIETMKGLFFCLGMVVFMLLGSVSP) form the signal peptide. The Extracellular segment spans residues 28-585 (MNNEGKALMA…SLPKSQVFTR (558 aa)). Asn-70 and Asn-79 each carry an N-linked (GlcNAc...) asparagine glycan. LRR repeat units lie at residues 74–97 (NVVSLNLSNLNLGGEISSALGDLM), 98–120 (NLQSIDLQGNKLGGQIPDEIGNC), 122–145 (SLAYVDFSTNLLFGDIPFSISKLK), 146–166 (QLEFLNLKNNQLTGPIPATLT), 170–192 (NLKTLDLARNQLTGEIPRLLYWN), 194–216 (VLQYLGLRGNMLTGTLSPDMCQL), 218–240 (GLWYFDVRGNNLTGTIPESIGNC), 242–261 (SFEILDVSYNQITGVIPYNI), 265–287 (QVATLSLQGNKLTGRIPEVIGLM), 289–311 (ALAVLDLSDNELTGPIPPILGNL), 313–335 (FTGKLYLHGNKLTGQIPPELGNM), 337–359 (RLSYLQLNDNELVGKIPPELGKL), 361–382 (QLFELNLANNNLVGLIPSNISS), 385–406 (ALNQFNVHGNFLSGAVPLEFRN), 409–431 (SLTYLNLSSNSFKGKIPAELGHI), 433–456 (NLDTLDLSGNNFSGSIPLTLGDLE), 457–479 (HLLILNLSRNHLNGTLPAEFGNL), 481–503 (SIQIIDVSFNFLAGVIPTELGQL), 505–527 (NINSLILNNNKIHGKIPDQLTNC), and 529–550 (SLANLNISFNNLSGIIPPMKNF). N-linked (GlcNAc...) asparagine glycans are attached at residues Asn-228 and Asn-239. N-linked (GlcNAc...) asparagine glycosylation is found at Asn-310 and Asn-334. The N-linked (GlcNAc...) asparagine glycan is linked to Asn-379. N-linked (GlcNAc...) asparagine glycans are attached at residues Asn-414, Asn-443, Asn-462, and Asn-469. N-linked (GlcNAc...) asparagine glycosylation is found at Asn-534, Asn-539, and Asn-549. A helical membrane pass occupies residues 586–606 (VAVICMVLGFITLICMIFIAV). Topologically, residues 607–967 (YKSKQQKPVL…FREDISKSSL (361 aa)) are cytoplasmic. Residues Thr-640 and Thr-648 each carry the phosphothreonine modification. The region spanning 651–921 (LDEKYIIGYG…EVSRVLLSLV (271 aa)) is the Protein kinase domain. Residues 657–665 (IGYGASSTV) and Lys-679 each bind ATP. Tyr-724 and Tyr-763 each carry phosphotyrosine. Residue Asp-776 is the Proton acceptor of the active site. Phosphotyrosine is present on Tyr-818. Thr-826 carries the post-translational modification Phosphothreonine. A disordered region spans residues 921 to 955 (VPSPPPKKLPSPAKVQEGEERRESHSSDTTTPQWF). The span at 936–946 (QEGEERRESHS) shows a compositional bias: basic and acidic residues.

The protein belongs to the protein kinase superfamily. Ser/Thr protein kinase family. As to expression, mostly expressed in developing organs, including bud clusters, flowers, siliques and young rosettes. Also detected in mature aboveground organs, such as leaves, stems and pedicels, but barely in roots.

The protein resides in the membrane. It carries out the reaction L-seryl-[protein] + ATP = O-phospho-L-seryl-[protein] + ADP + H(+). The enzyme catalyses L-threonyl-[protein] + ATP = O-phospho-L-threonyl-[protein] + ADP + H(+). Its function is as follows. Receptor kinase that regulates inflorescence architecture and organ shape as well as stomatal patterning, including density and clustering, together with ERL1 and ER. The polypeptide is LRR receptor-like serine/threonine-protein kinase ERL2 (ERL2) (Arabidopsis thaliana (Mouse-ear cress)).